Consider the following 125-residue polypeptide: MPTISQLVRKPRAAKPLKSKVPALGNSPQKRGVCTRVYTTTPKKPNSALRKVARVRLTNGFEVSSYIGGEGHNLQEHSVVLIRGGRVKDLPGVRYHTVRGSLDTAGVKDRKQGRSKYGAKKPKSA.

The disordered stretch occupies residues 1–30 (MPTISQLVRKPRAAKPLKSKVPALGNSPQK). Over residues 9–18 (RKPRAAKPLK) the composition is skewed to basic residues. At aspartate 89 the chain carries 3-methylthioaspartic acid. Residues 103–125 (DTAGVKDRKQGRSKYGAKKPKSA) are disordered. Residues 113 to 125 (GRSKYGAKKPKSA) are compositionally biased toward basic residues.

Belongs to the universal ribosomal protein uS12 family. Part of the 30S ribosomal subunit. Contacts proteins S8 and S17. May interact with IF1 in the 30S initiation complex.

In terms of biological role, with S4 and S5 plays an important role in translational accuracy. Functionally, interacts with and stabilizes bases of the 16S rRNA that are involved in tRNA selection in the A site and with the mRNA backbone. Located at the interface of the 30S and 50S subunits, it traverses the body of the 30S subunit contacting proteins on the other side and probably holding the rRNA structure together. The combined cluster of proteins S8, S12 and S17 appears to hold together the shoulder and platform of the 30S subunit. This is Small ribosomal subunit protein uS12 from Nitrosospira multiformis (strain ATCC 25196 / NCIMB 11849 / C 71).